Here is a 124-residue protein sequence, read N- to C-terminus: Calvin cycle protein CP12-1, chloroplastic (124 aa).

The transit peptide at 1 to 47 directs the protein to the chloroplast; sequence MTTIAAAGLNVATPRVVVRPVARVLGPVRLNYPWKFGSMKRMVVVKA. Intrachain disulfides connect cysteine 68–cysteine 77 and cysteine 110–cysteine 119. Residues 90 to 124 form a disordered region; the sequence is AASHARDKKKAGGSDPLEEYCNDNPETDECRTYDN. The segment covering 105–116 has biased composition (acidic residues); it reads PLEEYCNDNPET.

Belongs to the CP12 family. In terms of assembly, monomer. Component of a complex that contains two dimers of PRK, two tetramers of GAPDH and CP12. CP12 associates with GAPDH, causing its conformation to change. This GAPDH/CP12 complex binds PRK to form a half-complex (one unit). This unit probably dimerizes due partially to interactions between the enzymes of each unit. Contains two disulfide bonds; only the oxidized protein, with two disulfide bonds, is active in complex formation. The C-terminal disulfide is involved in the interaction with GAPDH and the N-terminal disulfide mediates the binding of PRK with this binary complex. In terms of tissue distribution, mostly expressed in flowers, hypocotyl, cotyledons, leaves, stems, and flower stalks. Barely detectable in roots and siliques. Present in root tips and lateral roots. Accumulates in the cotyledons of etiolated seedlings.

It localises to the plastid. The protein resides in the chloroplast. In terms of biological role, acts as a linker essential in the assembly of a core complex of PRK/GAPDH. Coordinates the reversible inactivation of chloroplast enzymes GAPDH and PRK during darkness in photosynthetic tissues. The chain is Calvin cycle protein CP12-1, chloroplastic (CP12-1) from Arabidopsis thaliana (Mouse-ear cress).